The primary structure comprises 317 residues: UAP56-interacting factor (317 aa).

Position 1 is an N-acetylmethionine (methionine 1). The disordered stretch occupies residues methionine 1–serine 23. Position 14 is a phosphothreonine (threonine 14). The residue at position 23 (serine 23) is a Phosphoserine. Residues asparagine 26–glutamate 44 carry the UAP56-binding motif motif. Phosphoserine occurs at positions 60 and 117. A Glycyl lysine isopeptide (Lys-Gly) (interchain with G-Cter in SUMO1) cross-link involves residue lysine 139. Lysine 260 is covalently cross-linked (Glycyl lysine isopeptide (Lys-Gly) (interchain with G-Cter in SUMO2)).

The protein belongs to the UIF family. As to quaternary structure, interacts with DDX39B/UAP56 and NXF1; interaction with DDX39B/UAP56 and NXF1 are mutually exclusive. Interacts with SSRP1; required for its recruitment to mRNAs. Interacts with CHTOP.

It localises to the nucleus. It is found in the nucleoplasm. The protein resides in the nucleus speckle. Functionally, required for mRNA export from the nucleus to the cytoplasm. Acts as an adapter that uses the DDX39B/UAP56-NFX1 pathway to ensure efficient mRNA export and delivering to the nuclear pore. Associates with spliced and unspliced mRNAs simultaneously with ALYREF/THOC4. This is UAP56-interacting factor (Fyttd1) from Rattus norvegicus (Rat).